The primary structure comprises 260 residues: Indole-3-glycerol phosphate synthase (260 aa).

Belongs to the TrpC family.

It carries out the reaction 1-(2-carboxyphenylamino)-1-deoxy-D-ribulose 5-phosphate + H(+) = (1S,2R)-1-C-(indol-3-yl)glycerol 3-phosphate + CO2 + H2O. The protein operates within amino-acid biosynthesis; L-tryptophan biosynthesis; L-tryptophan from chorismate: step 4/5. This Staphylococcus aureus (strain COL) protein is Indole-3-glycerol phosphate synthase.